Here is a 186-residue protein sequence, read N- to C-terminus: Methylamine dehydrogenase light chain (186 aa).

The tat-type signal signal peptide spans 1–57 (MKKNTGFDSGIEKLARKTASKTGRRSFIGKLGGFLVGSALLPLLPVDRRGRMNEAHA). 6 disulfides stabilise this stretch: C78/C143, C84/C116, C91/C176, C93/C141, C101/C132, and C133/C164. W112 is modified (tryptophylquinone). Residues 112–163 (WVASCFNPGDGQTYLIAYRDCCGKQTCGRCNCVNVQGELPVYRPEFNNDIVW) constitute a cross-link (tryptophan tryptophylquinone (Trp-Trp)).

It belongs to the aromatic amine dehydrogenase light chain family. In terms of assembly, heterotetramer of two light and two heavy chains. Requires tryptophan tryptophylquinone residue as cofactor. Predicted to be exported by the Tat system. The position of the signal peptide cleavage has not been experimentally proven. Post-translationally, tryptophan tryptophylquinone (TTQ) is formed by oxidation of the indole ring of a tryptophan to form tryptophylquinone followed by covalent cross-linking with another tryptophan residue.

The protein resides in the periplasm. The enzyme catalyses 2 oxidized [amicyanin] + methylamine + H2O = 2 reduced [amicyanin] + formaldehyde + NH4(+) + 2 H(+). Its pathway is one-carbon metabolism; methylamine degradation; formaldehyde from methylamine: step 1/1. Methylamine dehydrogenase carries out the oxidation of methylamine. Electrons are passed from methylamine dehydrogenase to amicyanin. This chain is Methylamine dehydrogenase light chain (mauA), found in Methylobacillus flagellatus (strain ATCC 51484 / DSM 6875 / VKM B-1610 / KT).